The primary structure comprises 745 residues: Junction plakoglobin (745 aa).

The residue at position 1 (Met-1) is an N-acetylmethionine. Residue Thr-14 is glycosylated (O-linked (GlcNAc) threonine). Phosphoserine occurs at positions 99 and 125. ARM repeat units follow at residues 132-171, 172-215, 216-255, 258-297, 298-341, 342-381, 383-420, 423-464, 470-510, 512-551, 574-613, and 615-661; these read NYQD…QLSK, KEAS…LSHH, REGL…NLLL, EGAK…LLAY, GNQE…LSVC, PSNK…NLSD, ATKQ…NLTC, SKNK…HLTS, EMAQ…NLAL, PANH…QPYT, PMNR…ELAQ, and KEAA…PDYR. The interaction with DSC1 and DSG1 stretch occupies residues 132 to 297; it reads NYQDDAELAT…TTDCLQLLAY (166 aa). Ser-182 bears the Phosphoserine mark. The tract at residues 574 to 661 is interaction with DSC1; sequence PMNRMEIFRL…ISEDKNPDYR (88 aa). Residues Ser-665 and Ser-730 each carry the phosphoserine modification.

Belongs to the beta-catenin family. In terms of assembly, homodimer. Component of an E-cadherin/catenin adhesion complex composed of at least E-cadherin/CDH1 and gamma-catenin/JUP, and possibly alpha-catenin/CTNNA1; the complex is located to adherens junctions. The stable association of CTNNA1 is controversial as CTNNA1 was shown not to bind to F-actin when assembled in the complex. Interacts with MUC1. Interacts with CAV1. Interacts with PTPRJ. Interacts with DSG1. Interacts with DSC1 and DSC2. Interacts with PKP2. Interacts with PKP3 (via N-terminus); the interaction is required for PKP3 localization to desmosome cell-cell junctions. Interacts with DSG4. May be phosphorylated by FER. Expressed in the heart (at protein level).

Its subcellular location is the cell junction. The protein localises to the adherens junction. The protein resides in the desmosome. It localises to the cytoplasm. It is found in the cytoskeleton. Its subcellular location is the cell membrane. The protein localises to the nucleus. In terms of biological role, common junctional plaque protein. The membrane-associated plaques are architectural elements in an important strategic position to influence the arrangement and function of both the cytoskeleton and the cells within the tissue. The presence of plakoglobin in both the desmosomes and in the intermediate junctions suggests that it plays a central role in the structure and function of submembranous plaques. Acts as a substrate for VE-PTP and is required by it to stimulate VE-cadherin function in endothelial cells. Can replace beta-catenin in E-cadherin/catenin adhesion complexes which are proposed to couple cadherins to the actin cytoskeleton. The chain is Junction plakoglobin from Rattus norvegicus (Rat).